The following is a 3256-amino-acid chain: Proliferation marker protein Ki-67 (3256 aa).

Residues 27 to 76 (CLFGRGIECDIRIQLPVVSKQHCKIEIHEQEAILHNFSSTNPTQVNGSVI) form the FHA domain. The interval 101–199 (SLQNGRKSTE…RNGRNAADPI (99 aa)) is disordered. Basic and acidic residues predominate over residues 107 to 122 (KSTEFPRKIREQEPAR). Phosphoserine occurs at positions 125, 128, and 166. Positions 161-173 (NVKEDSTADDSKD) are enriched in basic and acidic residues. The segment covering 174–183 (SVAQGTTNVH) has biased composition (polar residues). A Glycyl lysine isopeptide (Lys-Gly) (interchain with G-Cter in SUMO2) cross-link involves residue K245. A phosphoserine mark is found at S264, S296, and S308. Disordered stretches follow at residues 271 to 426 (ATEK…RGSI) and 513 to 542 (RPEL…LVMH). Over residues 314–324 (DQNKGKGRDVE) the composition is skewed to basic and acidic residues. 2 positions are modified to phosphothreonine: T328 and T347. The span at 349-358 (VQYSQQQNSP) shows a compositional bias: polar residues. 3 positions are modified to phosphoserine: S352, S357, and S374. Position 401 is a phosphothreonine (T401). S411 is modified (phosphoserine). Residues 414–425 (KPENLSSKTRGS) are compositionally biased toward polar residues. The interval 495–678 (ESEGIPLKRR…AKQTQTKVIK (184 aa)) is positively charged patch (CP). Positions 502–549 (KRRRVSFGGHLRPELFDENLPPNTPLKRGEAPTKRKSLVMHTPPVLKK) constitute a PP1-binding domain. S538 is subject to Phosphoserine. Position 543 is a phosphothreonine (T543). Positions 575–632 (SLVISPPAPSPRKTPVASDQRRRSCKTAPASSSKSQTEVPKRGGRKSGNLPSKRVSIS) are disordered. 2 positions are modified to phosphoserine: S579 and S584. Residues 603–612 (PASSSKSQTE) are compositionally biased toward polar residues. At S648 the chain carries Phosphoserine. The interval 674-707 (TKVIKHGPQRSMNKRQRRPATPKKPVGEVHSQFS) is disordered. Basic residues predominate over residues 676–694 (VIKHGPQRSMNKRQRRPAT). Phosphothreonine is present on T761. The interval 853-886 (SLETKTSDTETEPSKTVSTANRSGRSTEFRNIQK) is disordered. S859 carries the phosphoserine modification. The segment covering 866 to 882 (SKTVSTANRSGRSTEFR) has biased composition (polar residues). A 16 X 122 AA approximate repeats region spans residues 1000–2928 (GKITKMPCQS…ASFQELSQTP (1929 aa)). K167R repeat units follow at residues 1001–1112 (KITK…FQTP), 1123–1234 (KTTK…FQTP), 1245–1356 (KTTK…FQTP), 1367–1477 (KTTK…FQTP), 1488–1597 (KTTK…LFQT), and 1609–1720 (KTAK…FQTP). T1017 is modified (phosphothreonine). Residues K1022 and K1035 each participate in a glycyl lysine isopeptide (Lys-Gly) (interchain with G-Cter in SUMO2) cross-link. The interval 1045–1073 (TRTSGETTHTHREPAGDGKSIRTFKESPK) is disordered. Over residues 1052–1072 (THTHREPAGDGKSIRTFKESP) the composition is skewed to basic and acidic residues. S1071 is subject to Phosphoserine. Residue T1091 is modified to Phosphothreonine. K1093 participates in a covalent cross-link: Glycyl lysine isopeptide (Lys-Gly) (interchain with G-Cter in SUMO1); alternate. K1093 is covalently cross-linked (Glycyl lysine isopeptide (Lys-Gly) (interchain with G-Cter in SUMO2); alternate). S1098 carries the post-translational modification Phosphoserine. A disordered region spans residues 1109–1151 (FQTPGPSEESMTDEKTTKIACKSPPPESVDTPTSTKQWPKRSL). Residue T1111 is modified to Phosphothreonine. Position 1131 is a phosphoserine (S1131). T1139 is modified (phosphothreonine). Position 1142 is a phosphoserine (S1142). T1167 is modified (phosphothreonine). S1169 carries the post-translational modification Phosphoserine. T1176 is modified (phosphothreonine). Residues K1185 and K1188 each participate in a glycyl lysine isopeptide (Lys-Gly) (interchain with G-Cter in SUMO2) cross-link. T1193 carries the phosphothreonine modification. S1207 is subject to Phosphoserine. A Phosphothreonine modification is found at T1233. The interval 1246–1276 (TTKIPCDSPQSDPVDTPTSTKQRPKRSIRKA) is disordered. Residues S1253 and S1256 each carry the phosphoserine modification. The segment covering 1253-1266 (SPQSDPVDTPTSTK) has biased composition (polar residues). Residues T1261, T1298, T1315, and T1327 each carry the phosphothreonine modification. Positions 1323–1518 (TENLTGSKRR…PQSKRSLRKV (196 aa)) are disordered. S1329 is subject to Phosphoserine. T1335 carries the phosphothreonine modification. A Glycyl lysine isopeptide (Lys-Gly) (interchain with G-Cter in SUMO2) cross-link involves residue K1337. Residue T1355 is modified to Phosphothreonine. Position 1376 is a phosphoserine (S1376). Phosphothreonine is present on T1383. The residue at position 1386 (S1386) is a Phosphoserine. Composition is skewed to basic and acidic residues over residues 1394-1406 (PLEK…ELSA) and 1418-1442 (THTD…KQKL). T1420 and T1437 each carry phosphothreonine. At S1496 the chain carries Phosphoserine. Residue T1503 is modified to Phosphothreonine. S1506 is subject to Phosphoserine. Position 1540 is a phosphothreonine (T1540). Y1552 bears the Phosphotyrosine mark. Phosphothreonine is present on residues T1557 and T1569. S1571 and S1617 each carry phosphoserine. The disordered stretch occupies residues 1597–1675 (TRGHTEESMT…PTGDGKSMKA (79 aa)). K1639 carries the N6-acetyllysine modification. K1643 participates in a covalent cross-link: Glycyl lysine isopeptide (Lys-Gly) (interchain with G-Cter in SUMO2). A compositionally biased stretch (basic and acidic residues) spans 1660–1672 (THTHTEPTGDGKS). S1679 and S1689 each carry phosphoserine. 5 disordered regions span residues 1689-1708 (SLTG…EVPE), 1717-1765 (FQTP…ADTE), 1771-1790 (FRKQ…PAVG), 1801-1824 (TPVQ…TRKE), and 1839-1886 (FQTP…KADV). Residue K1703 forms a Glycyl lysine isopeptide (Lys-Gly) (interchain with G-Cter in SUMO2) linkage. T1719 carries the phosphothreonine modification. S1721 bears the Phosphoserine mark. Residues 1722–1733 (HTKESMTNEKTT) are compositionally biased toward basic and acidic residues. 5 K167R repeats span residues 1731–1842 (KTTK…FQTP), 1854–1964 (TKKI…FQTP), 1975–2086 (KITE…FQTP), 2097–2204 (KTTK…FQTP), and 2215–2326 (KTTK…FQTP). S1740 carries the phosphoserine modification. T1747, T1764, T1784, and T1801 each carry phosphothreonine. S1815 carries the phosphoserine modification. T1841 bears the Phosphothreonine mark. Residues S1861 and S1864 each carry the phosphoserine modification. A compositionally biased stretch (polar residues) spans 1861-1874 (SPQSDPADTPTNTK). A phosphothreonine mark is found at T1869, T1897, T1906, and T1923. Phosphoserine is present on S1937. Residues 1961–2002 (FQTPGHTEESMTDDKITEVSCKSPQPDPVKTPTSSKQRLKIS) form a disordered region. T1963 bears the Phosphothreonine mark. The segment covering 1966-1977 (HTEESMTDDKIT) has biased composition (basic and acidic residues). Residue S1983 is modified to Phosphoserine. The residue at position 2005 (K2005) is an N6-acetyllysine. K2009 participates in a covalent cross-link: Glycyl lysine isopeptide (Lys-Gly) (interchain with G-Cter in SUMO1); alternate. K2009 is covalently cross-linked (Glycyl lysine isopeptide (Lys-Gly) (interchain with G-Cter in SUMO2); alternate). The disordered stretch occupies residues 2017–2192 (KLTQTSGKTT…TPKGKAQPLE (176 aa)). Phosphothreonine occurs at positions 2028 and 2065. Basic and acidic residues-rich tracts occupy residues 2028-2046 (THRE…KESA) and 2061-2070 (RWPRTPKEEA). K2067 participates in a covalent cross-link: Glycyl lysine isopeptide (Lys-Gly) (interchain with G-Cter in SUMO1); alternate. A Glycyl lysine isopeptide (Lys-Gly) (interchain with G-Cter in SUMO2); alternate cross-link involves residue K2067. Residue S2072 is modified to Phosphoserine. Residue T2085 is modified to Phosphothreonine. Over residues 2087–2099 (DHTEESTTDDKTT) the composition is skewed to basic and acidic residues. A Phosphoserine modification is found at S2105. Residue T2113 is modified to Phosphothreonine. Phosphoserine is present on residues S2116 and S2135. Residues 2145–2168 (HTDKVPGDEDKGINVFRETAKQKL) show a composition bias toward basic and acidic residues. 3 positions are modified to phosphothreonine: T2146, T2163, and T2203. Positions 2205–2400 (ICTDKPTTHE…KPAVSDEKNI (196 aa)) are disordered. S2223 is modified (phosphoserine). A phosphothreonine mark is found at T2231 and T2233. A Phosphoserine modification is found at S2239. Residue T2259 is modified to Phosphothreonine. S2261 carries the post-translational modification Phosphoserine. A phosphothreonine mark is found at T2268, T2285, T2325, T2328, and T2333. 5 K167R repeats span residues 2336–2447 (KTTK…FQTP), 2458–2569 (KITE…FSAP), 2580–2688 (KNTK…LSET), 2700–2805 (KATK…GFKD), and 2819–2928 (KTTK…SQTP). A Phosphoserine modification is found at S2344. Residues T2352 and T2389 each carry the phosphothreonine modification. Position 2395 is a phosphoserine (S2395). T2406 is subject to Phosphothreonine. A Phosphoserine modification is found at S2420. T2426 and T2446 each carry phosphothreonine. Residues 2445–2480 (QTPGHTEESMTDDKITEVSCKSPQPESFKTSRSSKQ) are disordered. The segment covering 2449–2460 (HTEESMTDDKIT) has biased composition (basic and acidic residues). Polar residues predominate over residues 2463–2475 (SCKSPQPESFKTS). At S2466 the chain carries Phosphoserine. K2492 participates in a covalent cross-link: Glycyl lysine isopeptide (Lys-Gly) (interchain with G-Cter in SUMO1). The tract at residues 2497-2521 (AVSKLTRTSGETTQTHTEPTGDSKS) is disordered. A compositionally biased stretch (polar residues) spans 2501 to 2514 (LTRTSGETTQTHTE). Phosphoserine occurs at positions 2505, 2528, and 2588. The segment at 2570–3256 (GHTEESMTID…TRSHRDSEDI (687 aa)) is disordered. Basic and acidic residues-rich tracts occupy residues 2609-2618 (RKEVKEELSA), 2632-2644 (THKE…EGIK), and 2660-2675 (EPSR…KAQP). K2613 is covalently cross-linked (Glycyl lysine isopeptide (Lys-Gly) (interchain with G-Cter in SUMO1); alternate). K2613 is covalently cross-linked (Glycyl lysine isopeptide (Lys-Gly) (interchain with G-Cter in SUMO2); alternate). Residue S2638 is modified to Phosphoserine. Positions 2685 to 2696 (LSETSGHTQESL) are enriched in polar residues. A Phosphoserine modification is found at S2708. K2734 participates in a covalent cross-link: Glycyl lysine isopeptide (Lys-Gly) (interchain with G-Cter in SUMO1); alternate. Residue K2734 forms a Glycyl lysine isopeptide (Lys-Gly) (interchain with G-Cter in SUMO2); alternate linkage. Composition is skewed to basic and acidic residues over residues 2751 to 2770 (DADK…KESA) and 2810 to 2821 (HTEESMTDDKTT). Residues S2827, S2828, and S2838 each carry the phosphoserine modification. K2852 is covalently cross-linked (Glycyl lysine isopeptide (Lys-Gly) (interchain with G-Cter in SUMO1); alternate). A Glycyl lysine isopeptide (Lys-Gly) (interchain with G-Cter in SUMO2); alternate cross-link involves residue K2852. Residues 2869-2881 (THTDKEPVGEGKG) show a composition bias toward basic and acidic residues. Residues 2941 to 2951 (SFTSAPKQTPD) are compositionally biased toward polar residues. K2967 participates in a covalent cross-link: Glycyl lysine isopeptide (Lys-Gly) (interchain with G-Cter in SUMO2). Over residues 2982–2991 (KSQSKSNTSL) the composition is skewed to polar residues. Residue K2986 is modified to N6-acetyllysine. A compositionally biased stretch (basic residues) spans 3029 to 3039 (KKQRVAPRARG). 3034–3041 (APRARGKS) serves as a coordination point for ATP. Residue S3041 is modified to Phosphoserine. 2 stretches are compositionally biased toward basic and acidic residues: residues 3071 to 3080 (KTNKEEHKLQ) and 3113 to 3124 (ERIEINRNEKKP). Phosphoserine is present on S3128. Basic and acidic residues predominate over residues 3138–3154 (DGARKPIPRDKVTENKR). A compositionally biased stretch (polar residues) spans 3207–3223 (SQPAASTLESKSVQRVT). Basic and acidic residues predominate over residues 3228 to 3241 (RCAENPKKAEDNVC).

As to quaternary structure, interacts with KIF15. Interacts (via the FHA domain) with NIFK. Interacts with PPP1CC. Component of a complex at least composed of ZNF335, HCFC1, CCAR2, EMSY, MKI67, RBBP5, ASH2L and WDR5; the complex is formed as a result of interactions between components of a nuclear receptor-mediated transcription complex and a histone methylation complex. Interacts with ZNF335. Hyperphosphorylated by CDK1 in mitosis; hyperphosphorylatiom prevents undergoing liquid-liquid phase separation. Dephosphorylated by PPP1CC at the onset of anaphase. Dephosphorylated by protein phosphatase 2A (PP2A) at the onset of anaphase. Dephosphorylation by protein phosphatase 2A (PP2A) and simultaneous exposure of the positively charged patch (CP) during mitotic exit induce the RNA-dependent formation of a liquid-like condensed phase on the chromosome surface. In terms of processing, ubiquitinated by the APC/C complex after neuronal progenitors exit mitosis during brain development, leading to clearance from constitutive heterochromatin.

The protein resides in the chromosome. The protein localises to the nucleus. It is found in the nucleolus. Its function is as follows. Protein that associates with the surface of mitotic chromosomes and acts both as a chromosome repellent during early mitosis and chromosome attractant during late mitosis. Required to maintain individual mitotic chromosomes dispersed in the cytoplasm following nuclear envelope disassembly. During early mitosis, relocalizes from nucleoli to the chromosome surface where it forms extended brush structures that cover a substantial fraction of the chromosome surface. The MKI67 brush structure prevents chromosomes from collapsing into a single chromatin mass by forming a steric and electrostatic charge barrier: the protein has a high net electrical charge and acts as a surfactant, dispersing chromosomes and enabling independent chromosome motility. During mitotic anaphase, the MKI67 brush structure collapses and MKI67 switches from a chromosome repellent to a chromosome attractant to promote chromosome clustering and facilitate the exclusion of large cytoplasmic particles from the future nuclear space. Mechanistically, dephosphorylation during mitotic exit and simultaneous exposure of a conserved basic patch induce the RNA-dependent formation of a liquid-like condensed phase on the chromosome surface, promoting coalescence of neighboring chromosome surfaces and clustering of chromosomes. Binds premature ribosomal RNAs during anaphase; promoting liquid-liquid phase separation. Binds DNA, with a preference for supercoiled DNA and AT-rich DNA. Does not contribute to the internal structure of mitotic chromosomes. May play a role in chromatin organization; it is however unclear whether it plays a direct role in chromatin organization or whether it is an indirect consequence of its function in mitotic chromosome. The protein is Proliferation marker protein Ki-67 of Homo sapiens (Human).